We begin with the raw amino-acid sequence, 123 residues long: Large ribosomal subunit protein bL12 (123 aa).

This sequence belongs to the bacterial ribosomal protein bL12 family. In terms of assembly, homodimer. Part of the ribosomal stalk of the 50S ribosomal subunit. Forms a multimeric L10(L12)X complex, where L10 forms an elongated spine to which 2 to 4 L12 dimers bind in a sequential fashion. Binds GTP-bound translation factors.

Forms part of the ribosomal stalk which helps the ribosome interact with GTP-bound translation factors. Is thus essential for accurate translation. In Bartonella quintana (strain Toulouse) (Rochalimaea quintana), this protein is Large ribosomal subunit protein bL12.